The chain runs to 175 residues: Ribosome maturation factor RimM (175 aa).

Residues 96–175 (EGDFYWHDLI…TIEVDWDAGF (80 aa)) form the PRC barrel domain.

Belongs to the RimM family. As to quaternary structure, binds ribosomal protein uS19.

The protein localises to the cytoplasm. An accessory protein needed during the final step in the assembly of 30S ribosomal subunit, possibly for assembly of the head region. Essential for efficient processing of 16S rRNA. May be needed both before and after RbfA during the maturation of 16S rRNA. It has affinity for free ribosomal 30S subunits but not for 70S ribosomes. This Histophilus somni (strain 129Pt) (Haemophilus somnus) protein is Ribosome maturation factor RimM.